A 142-amino-acid polypeptide reads, in one-letter code: Large ribosomal subunit protein uL11 (142 aa).

It belongs to the universal ribosomal protein uL11 family. As to quaternary structure, part of the ribosomal stalk of the 50S ribosomal subunit. Interacts with L10 and the large rRNA to form the base of the stalk. L10 forms an elongated spine to which L12 dimers bind in a sequential fashion forming a multimeric L10(L12)X complex. One or more lysine residues are methylated.

Forms part of the ribosomal stalk which helps the ribosome interact with GTP-bound translation factors. In Acinetobacter baumannii (strain AB307-0294), this protein is Large ribosomal subunit protein uL11.